We begin with the raw amino-acid sequence, 224 residues long: Pleckstrin homology domain-containing family B member 2 (224 aa).

Positions 2-109 constitute a PH domain; it reads AFVKSGWLLR…WKIALQDART (108 aa). K20 lines the a 1,2-diacyl-sn-glycero-3-phospho-L-serine pocket.

The protein resides in the recycling endosome membrane. In terms of biological role, involved in retrograde transport of recycling endosomes. The protein is Pleckstrin homology domain-containing family B member 2 (PLEKHB2) of Gallus gallus (Chicken).